Here is a 481-residue protein sequence, read N- to C-terminus: Zinc metalloproteinase/disintegrin (481 aa).

Residues 1-20 (MIEVLLVTICLAVFPYQGSS) form the signal peptide. Positions 21–189 (IILESGNVND…KKASQLYLTP (169 aa)) are excised as a propeptide. A Pyrrolidone carboxylic acid (Glu) modification is found at Glu-190. The Peptidase M12B domain occupies 197 to 392 (RYIKLAIVVD…DNPQCILNAP (196 aa)). 296–299 (RNTI) provides a ligand contact to an L-amino acid tripeptide. 3 disulfide bridges follow: Cys-308-Cys-387, Cys-349-Cys-371, and Cys-351-Cys-354. His-333 contributes to the Zn(2+) binding site. Residue Glu-334 is part of the active site. 2 residues coordinate Zn(2+): His-337 and His-343. Ser-357 contributes to the an L-amino acid tripeptide binding site. A propeptide spanning residues 393–410 (LRTDTVSTPVSGNEFLEA) is cleaved from the precursor. Residues 400 to 481 (TPVSGNEFLE…ADCPRNGLYG (82 aa)) enclose the Disintegrin domain. 6 disulfides stabilise this stretch: Cys-414/Cys-429, Cys-416/Cys-424, Cys-423/Cys-446, Cys-437/Cys-443, Cys-442/Cys-467, and Cys-455/Cys-474. A Cell attachment site motif is present at residues 459–461 (RGD).

This sequence belongs to the venom metalloproteinase (M12B) family. P-II subfamily. P-IIa sub-subfamily. As to quaternary structure, monomer. Zn(2+) is required as a cofactor. Post-translationally, the N-terminus is blocked. In terms of tissue distribution, expressed by the venom gland.

Its subcellular location is the secreted. Inhibited by EDTA and 1,10-phenanthroline. Is also inhibited by endogenous tripeptide inhibitors pyroGlu-Asn-Trp, pyroGlu-Gln-Trp, and pyroGlu-Lys-Trp. In terms of biological role, potent fibrinogenolytic protease which cleaves mainly the Aalpha chain of fibrinogen (FGA) and slightly the Bbeta (FGB) and the gamma (FGG) chains. May possess hemorrhagic activity. Compared to other SVMP, the substrate-binding pocket is relatively shallow. Is less susceptible to tripeptide inhibitors than TM-1 (AC U3KRG1) and TM-2. Inhibits platelet aggregation induced by ADP, thrombin, platelet-activating factor and collagen. Acts by inhibiting fibrinogen interaction with platelet receptors GPIIb/GPIIIa (ITGA2B/ITGB3). This chain is Zinc metalloproteinase/disintegrin, found in Protobothrops mucrosquamatus (Taiwan habu).